Reading from the N-terminus, the 256-residue chain is Small ribosomal subunit protein eS1 (256 aa).

Basic residues predominate over residues 1–18; sequence MAVGKNKRLSKGKKGLKK. A disordered region spans residues 1–20; the sequence is MAVGKNKRLSKGKKGLKKRT. Ala-2 is modified (N-acetylalanine; partial).

Belongs to the eukaryotic ribosomal protein eS1 family. In terms of assembly, component of the small ribosomal subunit. Mature ribosomes consist of a small (40S) and a large (60S) subunit. The 40S subunit contains about 33 different proteins and 1 molecule of RNA (18S). The 60S subunit contains about 49 different proteins and 3 molecules of RNA (25S, 5.8S and 5S).

It localises to the cytoplasm. The polypeptide is Small ribosomal subunit protein eS1 (rps1) (Talaromyces stipitatus (strain ATCC 10500 / CBS 375.48 / QM 6759 / NRRL 1006) (Penicillium stipitatum)).